A 252-amino-acid chain; its full sequence is Imidazole glycerol phosphate synthase subunit HisF (252 aa).

Active-site residues include Asp-11 and Asp-130.

The protein belongs to the HisA/HisF family. As to quaternary structure, heterodimer of HisH and HisF.

It is found in the cytoplasm. The catalysed reaction is 5-[(5-phospho-1-deoxy-D-ribulos-1-ylimino)methylamino]-1-(5-phospho-beta-D-ribosyl)imidazole-4-carboxamide + L-glutamine = D-erythro-1-(imidazol-4-yl)glycerol 3-phosphate + 5-amino-1-(5-phospho-beta-D-ribosyl)imidazole-4-carboxamide + L-glutamate + H(+). It participates in amino-acid biosynthesis; L-histidine biosynthesis; L-histidine from 5-phospho-alpha-D-ribose 1-diphosphate: step 5/9. Functionally, IGPS catalyzes the conversion of PRFAR and glutamine to IGP, AICAR and glutamate. The HisF subunit catalyzes the cyclization activity that produces IGP and AICAR from PRFAR using the ammonia provided by the HisH subunit. The chain is Imidazole glycerol phosphate synthase subunit HisF from Staphylococcus aureus (strain Mu3 / ATCC 700698).